A 320-amino-acid polypeptide reads, in one-letter code: Homoserine kinase (320 aa).

Pro100 to Ala110 serves as a coordination point for ATP.

The protein belongs to the GHMP kinase family. Homoserine kinase subfamily.

The protein resides in the cytoplasm. It catalyses the reaction L-homoserine + ATP = O-phospho-L-homoserine + ADP + H(+). It functions in the pathway amino-acid biosynthesis; L-threonine biosynthesis; L-threonine from L-aspartate: step 4/5. Catalyzes the ATP-dependent phosphorylation of L-homoserine to L-homoserine phosphate. The polypeptide is Homoserine kinase (Chlorobium phaeobacteroides (strain DSM 266 / SMG 266 / 2430)).